A 589-amino-acid polypeptide reads, in one-letter code: Delta-like protein 3 (589 aa).

The first 32 residues, 1-32 (MVSLQVSSLPQTLILAFLLPQALPAGVFELQI), serve as a signal peptide directing secretion. Residues 33-494 (HSFGPGPGPG…LRQADSQRFL (462 aa)) are Extracellular-facing. Positions 174 to 213 (ARCEPPAVGAACARLCRSRSAPSRCGPGLRPCTPFPDECE) constitute a DSL domain. 6 consecutive EGF-like domains span residues 218-251 (SLTV…PLCT), 276-312 (GPGP…PRCE), 314-353 (SGVT…SNCE), 355-391 (RVDR…PRCE), 393-429 (DLDD…RDCR), and 431-467 (RADP…VRCE). Cystine bridges form between cysteine 222–cysteine 233, cysteine 226–cysteine 239, cysteine 241–cysteine 250, cysteine 280–cysteine 291, cysteine 285–cysteine 300, cysteine 302–cysteine 311, cysteine 318–cysteine 329, cysteine 323–cysteine 341, cysteine 343–cysteine 352, cysteine 359–cysteine 370, cysteine 364–cysteine 379, cysteine 381–cysteine 390, cysteine 397–cysteine 408, cysteine 402–cysteine 417, cysteine 419–cysteine 428, cysteine 435–cysteine 446, cysteine 440–cysteine 455, and cysteine 457–cysteine 466. Residues 495–515 (LPPALGLLAAAALAGAALLLI) form a helical membrane-spanning segment. Residues 516 to 589 (HVRRRGPGRD…PAPSIYAREA (74 aa)) are Cytoplasmic-facing. The disordered stretch occupies residues 552–574 (QDGAGDGPTSSADWNHPEDGDSR).

Can bind and activate Notch-1 or another Notch receptor. Post-translationally, ubiquitinated by MIB (MIB1 or MIB2), leading to its endocytosis and subsequent degradation.

It localises to the membrane. Inhibits primary neurogenesis. May be required to divert neurons along a specific differentiation pathway. Plays a role in the formation of somite boundaries during segmentation of the paraxial mesoderm. The chain is Delta-like protein 3 (Dll3) from Rattus norvegicus (Rat).